Reading from the N-terminus, the 334-residue chain is Ornithine carbamoyltransferase (334 aa).

Carbamoyl phosphate is bound by residues 57–60 (STRT), Gln-84, Arg-108, and 135–138 (HPTQ). L-ornithine is bound by residues Asn-169, Asp-233, and 237–238 (SM). Carbamoyl phosphate contacts are provided by residues 275–276 (CL) and Arg-320.

This sequence belongs to the aspartate/ornithine carbamoyltransferase superfamily. OTCase family.

Its subcellular location is the cytoplasm. The enzyme catalyses carbamoyl phosphate + L-ornithine = L-citrulline + phosphate + H(+). It participates in amino-acid biosynthesis; L-arginine biosynthesis; L-arginine from L-ornithine and carbamoyl phosphate: step 1/3. Its function is as follows. Reversibly catalyzes the transfer of the carbamoyl group from carbamoyl phosphate (CP) to the N(epsilon) atom of ornithine (ORN) to produce L-citrulline. The sequence is that of Ornithine carbamoyltransferase from Vibrio parahaemolyticus serotype O3:K6 (strain RIMD 2210633).